Reading from the N-terminus, the 579-residue chain is Thiol:disulfide interchange protein DsbD (579 aa).

The first 16 residues, 1 to 16 (MKKLFLFFTLIFTAFA), serve as a signal peptide directing secretion. 2 disulfide bridges follow: Cys124–Cys129 and Cys193–Cys315. The next 8 membrane-spanning stretches (helical) occupy residues 178–198 (IFGF…LPML), 230–250 (LTYT…QIAL), 254–274 (YVMI…FGLF), 296–316 (GAFG…SPCT), 337–357 (AVTL…ITLF), 376–396 (FGFV…PEVW), 397–417 (ESRL…LQMS), and 420–440 (GFGY…VQPL). The Thioredoxin domain occupies 449–579 (TTTQSAVENM…AFSNWIEKLL (131 aa)). The cysteines at positions 495 and 498 are disulfide-linked.

Belongs to the thioredoxin family. DsbD subfamily.

The protein resides in the cell inner membrane. The catalysed reaction is [protein]-dithiol + NAD(+) = [protein]-disulfide + NADH + H(+). It carries out the reaction [protein]-dithiol + NADP(+) = [protein]-disulfide + NADPH + H(+). In terms of biological role, required to facilitate the formation of correct disulfide bonds in some periplasmic proteins and for the assembly of the periplasmic c-type cytochromes. Acts by transferring electrons from cytoplasmic thioredoxin to the periplasm. This transfer involves a cascade of disulfide bond formation and reduction steps. This chain is Thiol:disulfide interchange protein DsbD, found in Haemophilus influenzae (strain PittGG).